The following is a 220-amino-acid chain: Protein-L-isoaspartate O-methyltransferase (220 aa).

Residue serine 65 is part of the active site.

This sequence belongs to the methyltransferase superfamily. L-isoaspartyl/D-aspartyl protein methyltransferase family.

It is found in the cytoplasm. The enzyme catalyses [protein]-L-isoaspartate + S-adenosyl-L-methionine = [protein]-L-isoaspartate alpha-methyl ester + S-adenosyl-L-homocysteine. Catalyzes the methyl esterification of L-isoaspartyl residues in peptides and proteins that result from spontaneous decomposition of normal L-aspartyl and L-asparaginyl residues. It plays a role in the repair and/or degradation of damaged proteins. The chain is Protein-L-isoaspartate O-methyltransferase (pcm) from Pyrococcus horikoshii (strain ATCC 700860 / DSM 12428 / JCM 9974 / NBRC 100139 / OT-3).